The following is a 437-amino-acid chain: Enolase (437 aa).

Glutamine 163 is a binding site for (2R)-2-phosphoglycerate. The Proton donor role is filled by glutamate 205. Mg(2+) is bound by residues aspartate 242, glutamate 285, and aspartate 312. Lysine 337, arginine 366, serine 367, and lysine 388 together coordinate (2R)-2-phosphoglycerate. Catalysis depends on lysine 337, which acts as the Proton acceptor.

It belongs to the enolase family. Mg(2+) serves as cofactor.

The protein resides in the cytoplasm. It is found in the secreted. The protein localises to the cell surface. It carries out the reaction (2R)-2-phosphoglycerate = phosphoenolpyruvate + H2O. Its pathway is carbohydrate degradation; glycolysis; pyruvate from D-glyceraldehyde 3-phosphate: step 4/5. Functionally, catalyzes the reversible conversion of 2-phosphoglycerate (2-PG) into phosphoenolpyruvate (PEP). It is essential for the degradation of carbohydrates via glycolysis. The chain is Enolase from Nitratidesulfovibrio vulgaris (strain DP4) (Desulfovibrio vulgaris).